The following is a 200-amino-acid chain: Probable nicotinate-nucleotide adenylyltransferase (200 aa).

It belongs to the NadD family.

It carries out the reaction nicotinate beta-D-ribonucleotide + ATP + H(+) = deamido-NAD(+) + diphosphate. The protein operates within cofactor biosynthesis; NAD(+) biosynthesis; deamido-NAD(+) from nicotinate D-ribonucleotide: step 1/1. Functionally, catalyzes the reversible adenylation of nicotinate mononucleotide (NaMN) to nicotinic acid adenine dinucleotide (NaAD). The protein is Probable nicotinate-nucleotide adenylyltransferase of Clostridium botulinum (strain Eklund 17B / Type B).